Consider the following 404-residue polypeptide: NADH-quinone oxidoreductase subunit D 2 (404 aa).

Belongs to the complex I 49 kDa subunit family. NDH-1 is composed of 14 different subunits. Subunits NuoB, C, D, E, F, and G constitute the peripheral sector of the complex.

The protein localises to the cell inner membrane. It carries out the reaction a quinone + NADH + 5 H(+)(in) = a quinol + NAD(+) + 4 H(+)(out). NDH-1 shuttles electrons from NADH, via FMN and iron-sulfur (Fe-S) centers, to quinones in the respiratory chain. The immediate electron acceptor for the enzyme in this species is believed to be ubiquinone. Couples the redox reaction to proton translocation (for every two electrons transferred, four hydrogen ions are translocated across the cytoplasmic membrane), and thus conserves the redox energy in a proton gradient. The polypeptide is NADH-quinone oxidoreductase subunit D 2 (Rhizobium meliloti (strain 1021) (Ensifer meliloti)).